Here is a 429-residue protein sequence, read N- to C-terminus: MTAIAVVGSQWGDEGKGKITDFLSKEAAMAVRSNGGNNAGHTIEIGDKTFKMRLIPSGIFAAKKGAVIGNGVVINPEVMFGELDNLEKEGIDISGLKISNRAHIIMPYHILQDTYQEEAKGDKKIGTTKNGIGPCYMDKASRTGIRVCDLLERDTFEEKLRTNLAEKNALFTKVYGKPELKFEDIFEKYLEYGQKMKKYVTDTSVVVNDALDNDEKVLFEGAQGVMLDIDEGTYPYVTSSNTISGGIASGIGMGANRLDTVIGVCKAYTTRVGEGPFPTELLDEVGDRIRETAHEYGTVTGRPRRVGWFDSVALRHAKRVAGINALSLNLLDVFSGFDKIKIATAYELDGEKIDYYPASLKELYRCKPVYEELPAWEEDITNVKTWEDLPENAKKFLNRVSELVGVPLVTVSVGPDREQTIVLKNPWEK.

GTP-binding positions include 12 to 18 (GDEGKGK) and 40 to 42 (GHT). Catalysis depends on aspartate 13, which acts as the Proton acceptor. 2 residues coordinate Mg(2+): aspartate 13 and glycine 40. IMP-binding positions include 13-16 (DEGK), 38-41 (NAGH), threonine 128, arginine 142, glutamine 223, threonine 238, and arginine 302. The active-site Proton donor is histidine 41. A substrate-binding site is contributed by 298 to 304 (TVTGRPR). GTP contacts are provided by residues arginine 304, 330-332 (LLD), and 412-414 (SVG).

The protein belongs to the adenylosuccinate synthetase family. As to quaternary structure, homodimer. Requires Mg(2+) as cofactor.

It is found in the cytoplasm. It catalyses the reaction IMP + L-aspartate + GTP = N(6)-(1,2-dicarboxyethyl)-AMP + GDP + phosphate + 2 H(+). Its pathway is purine metabolism; AMP biosynthesis via de novo pathway; AMP from IMP: step 1/2. In terms of biological role, plays an important role in the de novo pathway of purine nucleotide biosynthesis. Catalyzes the first committed step in the biosynthesis of AMP from IMP. The protein is Adenylosuccinate synthetase of Lactobacillus johnsonii (strain CNCM I-12250 / La1 / NCC 533).